A 199-amino-acid chain; its full sequence is Recombination protein RecR (199 aa).

The segment at 57–72 adopts a C4-type zinc-finger fold; it reads CSQCHNITDTDPCQIC. Residues 80-176 enclose the Toprim domain; that stretch reads TTICVVQESR…KVTRLAHGLP (97 aa).

The protein belongs to the RecR family.

May play a role in DNA repair. It seems to be involved in an RecBC-independent recombinational process of DNA repair. It may act with RecF and RecO. This is Recombination protein RecR from Shouchella clausii (strain KSM-K16) (Alkalihalobacillus clausii).